The following is a 614-amino-acid chain: Leucine aminopeptidase 2 (614 aa).

Residues 139-141 and 271-276 contribute to the a peptide site; these read QCQ and PYGGME. Histidine 300 provides a ligand contact to Zn(2+). Glutamate 301 functions as the Proton acceptor in the catalytic mechanism. Residues histidine 304 and glutamate 323 each contribute to the Zn(2+) site. Tyrosine 385 acts as the Proton donor in catalysis.

It belongs to the peptidase M1 family. Zn(2+) serves as cofactor.

It localises to the cytoplasm. The protein localises to the nucleus. The catalysed reaction is an epoxide + H2O = an ethanediol. Functionally, aminopeptidase that preferentially cleaves di- and tripeptides. Also has low epoxide hydrolase activity (in vitro). Can hydrolyze the epoxide leukotriene LTA(4) but it forms preferentially 5,6-dihydroxy-7,9,11,14-eicosatetraenoic acid rather than the cytokine leukotriene B(4) as the product compared to the homologous mammalian enzyme (in vitro). This chain is Leucine aminopeptidase 2, found in Aspergillus fumigatus (strain ATCC MYA-4609 / CBS 101355 / FGSC A1100 / Af293) (Neosartorya fumigata).